The following is a 121-amino-acid chain: Small ribosomal subunit protein bS6 (121 aa).

The protein belongs to the bacterial ribosomal protein bS6 family.

Functionally, binds together with bS18 to 16S ribosomal RNA. The chain is Small ribosomal subunit protein bS6 from Pelagibacter ubique (strain HTCC1062).